We begin with the raw amino-acid sequence, 257 residues long: Diphthine synthase (257 aa).

Residues Leu-9, Asp-85, Val-88, 113–114 (SI), Leu-164, Ala-209, and His-234 contribute to the S-adenosyl-L-methionine site.

Belongs to the diphthine synthase family. In terms of assembly, homodimer.

It catalyses the reaction 2-[(3S)-amino-3-carboxypropyl]-L-histidyl-[translation elongation factor 2] + 3 S-adenosyl-L-methionine = diphthine-[translation elongation factor 2] + 3 S-adenosyl-L-homocysteine + 3 H(+). The protein operates within protein modification; peptidyl-diphthamide biosynthesis. In terms of biological role, S-adenosyl-L-methionine-dependent methyltransferase that catalyzes the trimethylation of the amino group of the modified target histidine residue in translation elongation factor 2 (EF-2), to form an intermediate called diphthine. The three successive methylation reactions represent the second step of diphthamide biosynthesis. The chain is Diphthine synthase from Methanocaldococcus jannaschii (strain ATCC 43067 / DSM 2661 / JAL-1 / JCM 10045 / NBRC 100440) (Methanococcus jannaschii).